The primary structure comprises 349 residues: Cobalt-precorrin-5B C(1)-methyltransferase (349 aa).

Belongs to the CbiD family.

It carries out the reaction Co-precorrin-5B + S-adenosyl-L-methionine = Co-precorrin-6A + S-adenosyl-L-homocysteine. It functions in the pathway cofactor biosynthesis; adenosylcobalamin biosynthesis; cob(II)yrinate a,c-diamide from sirohydrochlorin (anaerobic route): step 6/10. Catalyzes the methylation of C-1 in cobalt-precorrin-5B to form cobalt-precorrin-6A. This is Cobalt-precorrin-5B C(1)-methyltransferase from Saccharolobus islandicus (strain Y.N.15.51 / Yellowstone #2) (Sulfolobus islandicus).